The following is a 199-amino-acid chain: Imidazole glycerol phosphate synthase subunit HisH (199 aa).

Positions 3-199 (NITIIDTGCA…LKNFVEKVPF (197 aa)) constitute a Glutamine amidotransferase type-1 domain. Cys-78 functions as the Nucleophile in the catalytic mechanism. Catalysis depends on residues His-178 and Glu-180.

Heterodimer of HisH and HisF.

Its subcellular location is the cytoplasm. It catalyses the reaction 5-[(5-phospho-1-deoxy-D-ribulos-1-ylimino)methylamino]-1-(5-phospho-beta-D-ribosyl)imidazole-4-carboxamide + L-glutamine = D-erythro-1-(imidazol-4-yl)glycerol 3-phosphate + 5-amino-1-(5-phospho-beta-D-ribosyl)imidazole-4-carboxamide + L-glutamate + H(+). The enzyme catalyses L-glutamine + H2O = L-glutamate + NH4(+). It participates in amino-acid biosynthesis; L-histidine biosynthesis; L-histidine from 5-phospho-alpha-D-ribose 1-diphosphate: step 5/9. Its function is as follows. IGPS catalyzes the conversion of PRFAR and glutamine to IGP, AICAR and glutamate. The HisH subunit catalyzes the hydrolysis of glutamine to glutamate and ammonia as part of the synthesis of IGP and AICAR. The resulting ammonia molecule is channeled to the active site of HisF. The sequence is that of Imidazole glycerol phosphate synthase subunit HisH from Haemophilus influenzae (strain 86-028NP).